Consider the following 172-residue polypeptide: Cystatin-like cysteine protease inhibitor EPIC4 (172 aa).

A signal peptide spans 1–17 (MRASLSILVAFPALAAA). Positions 71–75 (QVVAG) match the Secondary area of contact motif. The interval 129–172 (EAATASSSSTPAPTPASTSTSASSSEETMLQSSVQQRAMFSDFV) is disordered. The segment covering 130–156 (AATASSSSTPAPTPASTSTSASSSEET) has biased composition (low complexity). Positions 157-166 (MLQSSVQQRA) are enriched in polar residues.

Belongs to the cystatin family.

The protein resides in the secreted. In terms of biological role, secreted effector that interacts with and inhibits host apoplastic pathogenesis-related papain-like cysteine proteases. Inhibition of host proteases by a pathogen extracellular protease inhibitor forms a specific type of defense-counterdefense mechanism between plants and microbial pathogens. This chain is Cystatin-like cysteine protease inhibitor EPIC4, found in Phytophthora infestans (Potato late blight agent).